The sequence spans 346 residues: Sensor histidine kinase GraS (346 aa).

A run of 2 helical transmembrane segments spans residues 15–35 (INWILWILFLNIILLGVAYID) and 43–63 (VFYIVILNVGLSILFLLFTFV). Residues 126-332 (EFVHDIKTPV…TFYFIFPQQN (207 aa)) form the Histidine kinase domain. H129 is modified (phosphohistidine; by autocatalysis).

Post-translationally, autophosphorylated.

The protein resides in the cell membrane. The enzyme catalyses ATP + protein L-histidine = ADP + protein N-phospho-L-histidine.. Member of the two-component regulatory system GraR/GraS involved in resistance against cationic antimicrobial peptides (CAMPs). GraS probably functions as a sensor protein kinase which is autophosphorylated at a histidine residue and transfers its phosphate group to GraR. In Staphylococcus epidermidis (strain ATCC 35984 / DSM 28319 / BCRC 17069 / CCUG 31568 / BM 3577 / RP62A), this protein is Sensor histidine kinase GraS (graS).